A 304-amino-acid polypeptide reads, in one-letter code: MELEQLKCFVAAAEELHFGRAAQKMGILPASLGRHLRLLEESLGTRLMSRTTRSVALTEDGVALLEEVRPLLHRLQTLAEEFRSRKTQQATVLRIGAIDSAAAGLIPPLLHDFRERFPGIITQLVEDKSIRLIPKLIAGRLDIVFIRPRDGLNRNLVVRTLTQETPVIALPVTHPLANRERISVDELREEPLIVPERRSRPHSYDLTMKLFEDAGLHPRIAQTADEKQTIINLVAAGIGSAIVPRWTAKLAVFGVTFVPLMTVGGISLRKLPLAAAWAKAVRDPGRDQLLELLDTNIDRYAEQA.

In terms of domain architecture, HTH lysR-type spans 1–58; sequence MELEQLKCFVAAAEELHFGRAAQKMGILPASLGRHLRLLEESLGTRLMSRTTRSVALT. Residues 18 to 37 constitute a DNA-binding region (H-T-H motif); sequence FGRAAQKMGILPASLGRHLR.

It belongs to the LysR transcriptional regulatory family.

Its function is as follows. Transcriptional regulator of the ttuABCDE tartrate utilization operon. This chain is HTH-type transcriptional regulator TtuA (ttuA), found in Agrobacterium vitis (Rhizobium vitis).